The chain runs to 977 residues: METKGYHSRPEGLDMERRWGQVSQPVDRPSLGPAERTEENNYMEIVNVSCVSGAIPNNSTQGSSKEKQELLPCLQQDNTQSGILTSEIKTELEPKELSATVAESMGLYMDSVREADYAFEQHAQQGSLSPAKIYQNVEQLMKFYKENGHRSSTLSNVSRPSRSFLPDPGSAVNGGVMRAMVKSPILCHEKSPSVCSPLNMTSSVCSPAGINSVSSTTVRFGSFPVHSPITQGTPLTCSPTVDNRGSRSHSPAHASNVGSPLSSPLSSMKSPISSPPSHCSVKSPVSSPNNVTLRSCVSSPANINNSRCSVSSPSKANNRSTLSSPAASTVGSICSPNAFSYPASGASVGSSATRDVIPSPDTHEKGAHEVPFPKTEEVENAISNGVTGQLNIVQYIKPEPDGAFSSSCLGGNSKIHSDSPFSSVPIKQESTKHSCSGASFKGNPTVNPFPFMDGSYFSFMDDKDYYSLSGILGPPVPGFEGNCEGTGFPMGIKQEPDYGIYYPEASIPSSAIVGVNSGGQSFHYRIGAQGTISLSRSARDQSFQHLSSFPPVNTLVESWKSHGDLSARKIDGYPVLEYIPENVSSSTLRSVSTGSSRPSKICLVCGDGASGCHYGVVTCGSCKVFFKRAVEGQHNYLCAGRNDCIIDKIRRKNCPACRLQKCLQAGMNLGARKSKKLGKLKGLHEEQPQQPPPPQSPEEGTTYIAPAKEPSVNTALVPQLSSISRALTPSPVMVLENIEPEIVYAGYDSSKPDTAENLLSTLNRLAGKQMIQVVKWAKVLPGFKNLPLEDQITLIQYSRMCLSSFALSWRSYKHTNSQFFYFAPDLVFNEEKMHQSAMYELCQGMHQISLQFVRLQFTFEEYTFMEVLLLLSTIPKDGLKSQAAFEEMRANYIKELRKMVTKCPNNSGQSWQGFYQLTKFLDSMHDLVSDLLEFCFYTFRELQALKVEFPAMLVEIISDQLPKVESGNAKPLYFHRK.

A compositionally biased stretch (basic and acidic residues) spans 1 to 19 (METKGYHSRPEGLDMERRW). Disordered stretches follow at residues 1-37 (METK…AERT) and 231-288 (QGTP…VSSP). The segment at 1–601 (METKGYHSRP…STGSSRPSKI (601 aa)) is modulating. Positions 231-243 (QGTPLTCSPTVDN) are enriched in polar residues. A phosphoserine mark is found at Ser250, Ser259, Ser283, Ser287, and Ser299. Over residues 259–288 (SPLSSPLSSMKSPISSPPSHCSVKSPVSSP) the composition is skewed to low complexity. 2 disordered regions span residues 305 to 327 (NSRC…SPAA) and 344 to 368 (SGAS…KGAH). The Zn(2+) site is built by Cys602, Cys605, Cys619, Cys622, Cys638, Cys644, Cys654, and Cys657. 2 NR C4-type zinc fingers span residues 602-622 (CLVC…CGSC) and 638-662 (CAGR…LQKC). Positions 602-667 (CLVCGDGASG…RLQKCLQAGM (66 aa)) form a DNA-binding region, nuclear receptor. The tract at residues 668–718 (NLGARKSKKLGKLKGLHEEQPQQPPPPQSPEEGTTYIAPAKEPSVNTALVP) is hinge. The segment at 682–703 (GLHEEQPQQPPPPQSPEEGTTY) is disordered. An NR LBD domain is found at 719–957 (QLSSISRALT…EFPAMLVEII (239 aa)). Positions 763 and 769 each coordinate 21-hydroxyprogesterone. The aldosterone site is built by Asn763 and Gln769. Progesterone contacts are provided by Asn763 and Gln769. Residues 775–778 (KWAK) form an important for coactivator binding region. The 21-hydroxyprogesterone site is built by Arg810 and Thr938. Positions 810 and 938 each coordinate aldosterone. The progesterone site is built by Arg810 and Thr938.

The protein belongs to the nuclear hormone receptor family. NR3 subfamily.

The protein resides in the cytoplasm. Its subcellular location is the nucleus. Receptor for both mineralocorticoids (MC) such as aldosterone and glucocorticoids (GC) such as corticosterone or cortisol. Binds to mineralocorticoid response elements (MRE) and transactivates target genes. The effect of MC is to increase ion and water transport and thus raise extracellular fluid volume and blood pressure and lower potassium levels. The sequence is that of Mineralocorticoid receptor (NR3C2) from Tupaia belangeri (Common tree shrew).